A 744-amino-acid chain; its full sequence is Cullin-1 (744 aa).

The region spanning 674 to 736 (DRRYAIDASI…RDYLERDKDN (63 aa)) is the Cullin neddylation domain.

The protein belongs to the cullin family. Part of a SCF (SKP1-CUL1-F-box protein) E3 ubiquitin-protein ligase complex. Is able to form the SCF complex together with SKP1 and the rice black streaked dwarf virus RBSDV protein P7-2. Interacts with D3. Neddylated (rubylated). Deneddylation occurs upon interaction with the COP9 signalosome (CSN) complex. In terms of tissue distribution, expressed in dry seeds and coleoptiles.

In terms of biological role, involved in ubiquitination and subsequent proteasomal degradation of target proteins. The chain is Cullin-1 from Oryza sativa subsp. japonica (Rice).